The chain runs to 270 residues: MAGAENWPGQQLELDEDEASCCRWGAQHAGARELAALYSPGKRLQEWCSVILCFSLIAHNLVHLLLLARWEDTPLVILGVVAGALIADFLSGLVHWGADTWGSVELPIVGKAFIRPFREHHIDPTAITRHDFIETNGDNCLVTLLPLLNMAYKFRTHSPEALEQLYPWECFVFCLIIFGTFTNQIHKWSHTYFGLPRWVTLLQDWHVILPRKHHRIHHVSPHETYFCITTGWLNYPLEKIGFWRRLEDLIQGLTGEKPRADDMKWAQKIK.

Helical transmembrane passes span 47-67 (WCSV…LLLL), 74-94 (PLVI…SGLV), and 161-181 (ALEQ…FGTF). The Histidine box-1 signature appears at 186–190 (HKWSH). The short motif at 213–217 (HHRIH) is the Histidine box-2 element.

This sequence belongs to the fatty acid desaturase CarF family.

The protein resides in the endoplasmic reticulum membrane. The enzyme catalyses a 1-(1,2-saturated alkyl)-2-acyl-sn-glycero-3-phosphoethanolamine + 2 Fe(II)-[cytochrome b5] + O2 + 2 H(+) = a 1-O-(1Z-alkenyl)-2-acyl-sn-glycero-3-phosphoethanolamine + 2 Fe(III)-[cytochrome b5] + 2 H2O. The catalysed reaction is a 1-O-hexadecyl-2-acyl-sn-glycero-3-phosphoethanolamine + 2 Fe(II)-[cytochrome b5] + O2 + 2 H(+) = a 1-O-(1Z-hexadecenyl)-2-acyl-sn-glycero-3-phosphoethanolamine + 2 Fe(III)-[cytochrome b5] + 2 H2O. It catalyses the reaction a 1-O-octadecyl-2-acyl-sn-glycero-3-phosphoethanolamine + 2 Fe(II)-[cytochrome b5] + O2 + 2 H(+) = a 1-O-(1Z-octadecenyl)-2-acyl-sn-glycero-3-phosphoethanolamine + 2 Fe(III)-[cytochrome b5] + 2 H2O. It carries out the reaction a 1-O-(9Z-octadecenyl)-2-acyl-sn-glycero-3-phosphoethanolamine + 2 Fe(II)-[cytochrome b5] + O2 + 2 H(+) = a 1-O-(1Z,9Z-octadecadienyl)-2-acyl-sn-glycero-3-phosphoethanolamine + 2 Fe(III)-[cytochrome b5] + 2 H2O. The protein operates within lipid metabolism; fatty acid metabolism. Its function is as follows. Plasmanylethanolamine desaturase involved in plasmalogen biogenesis in the endoplasmic reticulum membrane. Plasmalogens are glycerophospholipids with a hydrocarbon chain linked by a vinyl ether bond at the glycerol sn-1 position, and are involved in antioxidative and signaling mechanisms. In Homo sapiens (Human), this protein is Plasmanylethanolamine desaturase 1.